A 451-amino-acid chain; its full sequence is Tubulin alpha-1A chain (451 aa).

Gly10, Gln11, Ala12, and Gln15 together coordinate GTP. Lys40 carries the N6-acetyllysine modification. GTP is bound by residues Glu71, Ala99, Ser140, Gly143, Gly144, Thr145, Gly146, Thr179, Glu183, Asn206, Tyr224, Asn228, and Leu252. Glu71 is a binding site for Mg(2+). Glu254 is a catalytic residue. Tyr282 is modified (3'-nitrotyrosine). Position 439 is a phosphoserine (Ser439). 2 positions are modified to 5-glutamyl polyglutamate: Glu443 and Glu445. Tyr451 carries the 3'-nitrotyrosine modification.

This sequence belongs to the tubulin family. Heterodimer of alpha- and beta-tubulin. A typical microtubule is a hollow water-filled tube with an outer diameter of 25 nm and an inner diameter of 15 nM. Alpha-beta heterodimers associate head-to-tail to form protofilaments running lengthwise along the microtubule wall with the beta-tubulin subunit facing the microtubule plus end conferring a structural polarity. Microtubules usually have 13 protofilaments but different protofilament numbers can be found in some organisms and specialized cells. Interacts with gamma-tubulin; the interaction allows microtubules to nucleate from the gamma-tubulin ring complex (gTuRC). Nascent microtubule interacts (via alpha-tubulin MREC motif) with TTC5/STRAP; this interaction may result in tubulin mRNA-targeted degradation. Component of sperm flagellar doublet microtubules. Mg(2+) serves as cofactor. Some glutamate residues at the C-terminus are polyglycylated, resulting in polyglycine chains on the gamma-carboxyl group. Glycylation is mainly limited to tubulin incorporated into axonemes (cilia and flagella) whereas glutamylation is prevalent in neuronal cells, centrioles, axonemes, and the mitotic spindle. Both modifications can coexist on the same protein on adjacent residues, and lowering polyglycylation levels increases polyglutamylation, and reciprocally. Cilia and flagella glycylation is required for their stability and maintenance. Flagella glycylation controls sperm motility. In terms of processing, some glutamate residues at the C-terminus are polyglutamylated, resulting in polyglutamate chains on the gamma-carboxyl group. Polyglutamylation plays a key role in microtubule severing by spastin (SPAST). SPAST preferentially recognizes and acts on microtubules decorated with short polyglutamate tails: severing activity by SPAST increases as the number of glutamates per tubulin rises from one to eight, but decreases beyond this glutamylation threshold. Glutamylation is also involved in cilia motility. Post-translationally, acetylation of alpha chains at Lys-40 is located inside the microtubule lumen. This modification has been correlated with increased microtubule stability, intracellular transport and ciliary assembly. Methylation of alpha chains at Lys-40 is found in mitotic microtubules and is required for normal mitosis and cytokinesis contributing to genomic stability. In terms of processing, nitration of Tyr-451 is irreversible and interferes with normal dynein intracellular distribution. Post-translationally, undergoes a tyrosination/detyrosination cycle, the cyclic removal and re-addition of a C-terminal tyrosine residue by the enzymes tubulin tyrosine carboxypeptidase (MATCAP1, VASH1 or VASH2) and tubulin tyrosine ligase (TTL), respectively. Tyrosination promotes microtubule interaction with CAP-Gly domain-containing proteins such as CLIP1, CLIP2 and DCTN1. Tyrosination regulates the initiation of dynein-dynactin motility via interaction with DCTN1, which brings the dynein-dynactin complex into contact with microtubules. In neurons, tyrosinated tubulins mediate the initiation of retrograde vesicle transport. In terms of processing, detyrosination is involved in metaphase plate congression by guiding chromosomes during mitosis: detyrosination promotes interaction with CENPE, promoting pole-proximal transport of chromosomes toward the equator. Detyrosination increases microtubules-dependent mechanotransduction in dystrophic cardiac and skeletal muscle. In cardiomyocytes, detyrosinated microtubules are required to resist to contractile compression during contraction: detyrosination promotes association with desmin (DES) at force-generating sarcomeres, leading to buckled microtubules and mechanical resistance to contraction.

It is found in the cytoplasm. The protein resides in the cytoskeleton. Its subcellular location is the flagellum axoneme. The catalysed reaction is GTP + H2O = GDP + phosphate + H(+). In terms of biological role, tubulin is the major constituent of microtubules, protein filaments consisting of alpha- and beta-tubulin heterodimers. Microtubules grow by the addition of GTP-tubulin dimers to the microtubule end, where a stabilizing cap forms. Below the cap, tubulin dimers are in GDP-bound state, owing to GTPase activity of alpha-tubulin. The protein is Tubulin alpha-1A chain (TUBA1A) of Sus scrofa (Pig).